The primary structure comprises 744 residues: Collagen alpha-1(VIII) chain (744 aa).

Positions Met-1–Leu-24 are cleaved as a signal peptide. Residues Ala-29–Arg-118 are nonhelical region (NC2). Residues Lys-101–Gly-110 show a composition bias toward basic and acidic residues. 3 disordered regions span residues Lys-101–Leu-395, Gly-412–Gly-439, and Gly-457–Leu-590. Positions Gly-119–Pro-572 are triple-helical region (COL1). Over residues Pro-129–Leu-138 the composition is skewed to pro residues. Low complexity predominate over residues Lys-169–Met-191. Residues Gly-204–Gly-218 show a composition bias toward gly residues. A compositionally biased stretch (low complexity) spans Pro-298–Val-307. 2 stretches are compositionally biased toward gly residues: residues Gly-329–Gly-338 and Gly-412–Gly-421. Composition is skewed to low complexity over residues Leu-470–Ser-507 and Pro-548–Pro-557. Pro residues predominate over residues Leu-559 to Ser-579. Positions Ala-573–Met-744 are nonhelical region (NC1). In terms of domain architecture, C1q spans Pro-611–Met-744.

In terms of assembly, homotrimers, or heterotrimers in association with alpha 2(VIII) type collagens. Four homotrimers can form a tetrahedron stabilized by central interacting C-terminal NC1 trimers. In terms of processing, prolines at the third position of the tripeptide repeating unit (G-X-Y) are hydroxylated in some or all of the chains. Proteolytically cleaved by neutrophil elastase, in vitro. Proteolytic processing produces the C-terminal NC1 domain fragment, vastatin. As to expression, high levels in calvarium, eye and skin of newborn mice; also in various epithelial, endothelial and mesenchymal cells.

It localises to the secreted. Its subcellular location is the extracellular space. It is found in the extracellular matrix. The protein localises to the basement membrane. Macromolecular component of the subendothelium. Major component of the Descemet's membrane (basement membrane) of corneal endothelial cells. Also a component of the endothelia of blood vessels. Necessary for migration and proliferation of vascular smooth muscle cells and thus, has a potential role in the maintenance of vessel wall integrity and structure, in particular in atherogenesis. Its function is as follows. Vastatin, the C-terminal fragment comprising the NC1 domain, inhibits aortic endothelial cell proliferation and causes cell apoptosis. The sequence is that of Collagen alpha-1(VIII) chain (Col8a1) from Mus musculus (Mouse).